We begin with the raw amino-acid sequence, 50 residues long: Fungus-induced-related protein 15 (50 aa).

Positions 1–21 (MNFYSLFVFIALIFSFNVVHG) are cleaved as a signal peptide.

In terms of biological role, may have role in hypoxia response. The chain is Fungus-induced-related protein 15 (fipr-15) from Caenorhabditis elegans.